Consider the following 168-residue polypeptide: HTH-type transcriptional regulator IscR (168 aa).

The HTH rrf2-type domain maps to Lys-2–Lys-131. Positions Leu-28–Lys-51 form a DNA-binding region, H-T-H motif. [2Fe-2S] cluster contacts are provided by Cys-92, Cys-98, and Cys-104.

Requires [2Fe-2S] cluster as cofactor.

Regulates the transcription of several operons and genes involved in the biogenesis of Fe-S clusters and Fe-S-containing proteins. The polypeptide is HTH-type transcriptional regulator IscR (Vibrio campbellii (strain ATCC BAA-1116)).